A 234-amino-acid chain; its full sequence is UPF0758 protein STH371 (234 aa).

Residues 110 to 232 (DLCNPRAVFE…YTSFRERGLL (123 aa)) form the MPN domain. H181, H183, and D194 together coordinate Zn(2+). Positions 181-194 (HNHPSGDPTPSRED) match the JAMM motif motif.

The protein belongs to the UPF0758 family.

This chain is UPF0758 protein STH371, found in Symbiobacterium thermophilum (strain DSM 24528 / JCM 14929 / IAM 14863 / T).